We begin with the raw amino-acid sequence, 241 residues long: RxLR effector protein SFI5 (241 aa).

An N-terminal signal peptide occupies residues 1-20; it reads MLRQARPLVVLIAVTFLVAS. Positions 44-62 match the RxLR-dEER motif; sequence RLLRTHHATIKVNADSEER.

Belongs to the RxLR effector family.

The protein localises to the secreted. It is found in the host cell membrane. In terms of biological role, effector that suppresses flg22-induced post-translational MAP kinase activation in tomato but not in Arabidopsis. The perception of highly conserved pathogen- or microbe-associated molecular patterns (PAMPs/MAMPs), such as flg22, triggers converging signaling pathways recruiting MAP kinase cascades and inducing transcriptional re-programming, yielding a generic antimicrobial response. This Phytophthora infestans (strain T30-4) (Potato late blight agent) protein is RxLR effector protein SFI5.